A 1252-amino-acid chain; its full sequence is DNA-directed RNA polymerase subunit beta (1252 aa).

It belongs to the RNA polymerase beta chain family. In terms of assembly, the RNAP catalytic core consists of 2 alpha, 1 beta, 1 beta' and 1 omega subunit. When a sigma factor is associated with the core the holoenzyme is formed, which can initiate transcription.

The catalysed reaction is RNA(n) + a ribonucleoside 5'-triphosphate = RNA(n+1) + diphosphate. In terms of biological role, DNA-dependent RNA polymerase catalyzes the transcription of DNA into RNA using the four ribonucleoside triphosphates as substrates. The polypeptide is DNA-directed RNA polymerase subunit beta (Chlamydia trachomatis serovar L2 (strain ATCC VR-902B / DSM 19102 / 434/Bu)).